Here is a 229-residue protein sequence, read N- to C-terminus: 2,3-bisphosphoglycerate-dependent phosphoglycerate mutase 2 (229 aa).

Substrate-binding positions include 8–15 (RHGQSEWN), 21–22 (TG), Arg-60, 87–90 (ERHY), Lys-98, 114–115 (RR), and 183–184 (GN). His-9 functions as the Tele-phosphohistidine intermediate in the catalytic mechanism. Glu-87 (proton donor/acceptor) is an active-site residue.

This sequence belongs to the phosphoglycerate mutase family. BPG-dependent PGAM subfamily.

The enzyme catalyses (2R)-2-phosphoglycerate = (2R)-3-phosphoglycerate. The protein operates within carbohydrate degradation; glycolysis; pyruvate from D-glyceraldehyde 3-phosphate: step 3/5. Its function is as follows. Catalyzes the interconversion of 2-phosphoglycerate and 3-phosphoglycerate. This Latilactobacillus sakei subsp. sakei (strain 23K) (Lactobacillus sakei subsp. sakei) protein is 2,3-bisphosphoglycerate-dependent phosphoglycerate mutase 2.